A 282-amino-acid polypeptide reads, in one-letter code: MEMO1 family protein Msm_1438 (282 aa).

Belongs to the MEMO1 family.

This is MEMO1 family protein Msm_1438 from Methanobrevibacter smithii (strain ATCC 35061 / DSM 861 / OCM 144 / PS).